Here is a 428-residue protein sequence, read N- to C-terminus: 2,3-bisphosphoglycerate-independent phosphoglycerate mutase 2 (428 aa).

It belongs to the BPG-independent phosphoglycerate mutase family. A-PGAM subfamily.

It catalyses the reaction (2R)-2-phosphoglycerate = (2R)-3-phosphoglycerate. The protein operates within carbohydrate degradation; glycolysis; pyruvate from D-glyceraldehyde 3-phosphate: step 3/5. Catalyzes the interconversion of 2-phosphoglycerate and 3-phosphoglycerate. This Methanocaldococcus jannaschii (strain ATCC 43067 / DSM 2661 / JAL-1 / JCM 10045 / NBRC 100440) (Methanococcus jannaschii) protein is 2,3-bisphosphoglycerate-independent phosphoglycerate mutase 2 (apgM2).